The primary structure comprises 499 residues: Terpentedienyl-diphosphate synthase (499 aa).

The Mg(2+) site is built by Asp-284 and Asp-286. A DXDD motif motif is present at residues 284-287 (DGDD).

It belongs to the terpene synthase family. Monomer. Requires Mg(2+) as cofactor.

It catalyses the reaction (2E,6E,10E)-geranylgeranyl diphosphate = terpentedienyl diphosphate. It participates in antibiotic biosynthesis. Its function is as follows. Involved in the production of the isoprenoid antibiotic terpentecin. Converts geranylgeranyl diphosphate (GGDP) into terpentedienol diphosphate (TDP) by a protonation-initiated cyclization. This is Terpentedienyl-diphosphate synthase (cyc1) from Kitasatospora griseola (Streptomyces griseolosporeus).